The sequence spans 311 residues: Ribonuclease HIII (311 aa).

An RNase H type-2 domain is found at 93 to 310 (LSAIGSDEVG…TKKALDIAKH (218 aa)). A divalent metal cation-binding residues include Asp99, Glu100, and Asp204.

The protein belongs to the RNase HII family. RnhC subfamily. It depends on Mn(2+) as a cofactor. Mg(2+) is required as a cofactor.

It is found in the cytoplasm. It carries out the reaction Endonucleolytic cleavage to 5'-phosphomonoester.. Endonuclease that specifically degrades the RNA of RNA-DNA hybrids. This Geobacillus kaustophilus (strain HTA426) protein is Ribonuclease HIII.